Reading from the N-terminus, the 202-residue chain is Josephin-1 (202 aa).

Position 15 is a phosphoserine (Ser-15). One can recognise a Josephin domain in the interval 23-202; sequence PPQIYHEKQR…EAHQSWRADV (180 aa). Cys-36 serves as the catalytic Nucleophile. His-139 acts as the Proton acceptor in catalysis.

As to quaternary structure, interacts with beta-actin/ACTB. Post-translationally, monoubiquitinated. Ubiquitination activates deubiquitination activity in vitro.

The protein resides in the cell membrane. The protein localises to the cytoplasm. The catalysed reaction is Thiol-dependent hydrolysis of ester, thioester, amide, peptide and isopeptide bonds formed by the C-terminal Gly of ubiquitin (a 76-residue protein attached to proteins as an intracellular targeting signal).. Functionally, deubiquitinates monoubiquitinated probes (in vitro). When ubiquitinated, cleaves 'Lys-63'-linked and 'Lys-48'-linked poly-ubiquitin chains (in vitro), hence may act as a deubiquitinating enzyme. May increase macropinocytosis and suppress clathrin- and caveolae-mediated endocytosis. May enhance membrane dynamics and cell motility independently of its catalytic activity. The sequence is that of Josephin-1 (JOSD1) from Bos taurus (Bovine).